The chain runs to 708 residues: Leukotoxin translocation ATP-binding protein LktB (708 aa).

The region spanning 1–126 (MEANHQRNDL…ACYQGQLILV (126 aa)) is the Peptidase C39 domain. One can recognise an ABC transmembrane type-1 domain in the interval 155-437 (FLETLIVSIF…LAQLWQDFQQ (283 aa)). The next 5 membrane-spanning stretches (helical) occupy residues 159-179 (LIVSIFLQIFALITPLFFQVV), 192-212 (LNIITVALAIVIIFEIVLSGL), 270-290 (ALTSVLDLLFSFIFFAVMWYY), 296-316 (LVILGSLPCYILWSIFISPIL), and 389-409 (VMVINLWLGAHLVISGDLSIG). The ABC transporter domain maps to 469 to 704 (ISFKNIRFRY…SNGLYSYLHQ (236 aa)). 503-510 (GRSGSGKS) is an ATP binding site.

This sequence belongs to the ABC transporter superfamily. Protein-1 exporter (TC 3.A.1.109) family. In terms of assembly, homodimer.

It is found in the cell inner membrane. The enzyme catalyses ATP + H2O + proteinSide 1 = ADP + phosphate + proteinSide 2.. Its function is as follows. Part of the ABC transporter complex LktBD involved in leukotoxin export. Transmembrane domains (TMD) form a pore in the inner membrane and the ATP-binding domain (NBD) is responsible for energy generation. The protein is Leukotoxin translocation ATP-binding protein LktB (lktB) of Mannheimia haemolytica (Pasteurella haemolytica).